Consider the following 566-residue polypeptide: Type IV pilus assembly ATPase PilB (566 aa).

326 to 333 (GPTGSGKT) lines the ATP pocket. Zn(2+) is bound by residues Cys-459, Cys-462, Cys-494, and Cys-497.

The protein belongs to the GSP E family. Homohexamer. Interacts with PilC. Interacts with FimX; this interaction positively regulates T4P assembly and twitching motility by promoting the activity of the PilB ATPase.

It is found in the cytoplasm. Functionally, ATPase component of the type IV pilus (T4P) that plays a role in surface and host cell adhesion, colonization, biofilm maturation, virulence, and twitching, a form of surface-associated motility facilitated by cycles of extension, adhesion, and retraction of T4P fibers. Acts as a molecular motor to provide the energy that is required for biogenesis of the pilus and the extrusion of substrates generated in the cytoplasm. PilB ATPase activity is also essential for T4P extension while antagonist PilT ATPase activity is required for T4P retraction. This chain is Type IV pilus assembly ATPase PilB (pilB), found in Pseudomonas aeruginosa (strain ATCC 15692 / DSM 22644 / CIP 104116 / JCM 14847 / LMG 12228 / 1C / PRS 101 / PAO1).